A 285-amino-acid chain; its full sequence is Tumor necrosis factor ligand superfamily member 13B (285 aa).

Over 1-46 the chain is Cytoplasmic; sequence MDDSTEREQSRLTSCLKKREEMKLKECVSILPRKESPSVRSSKDGK. Residues 47–67 form a helical; Signal-anchor for type II membrane protein membrane-spanning segment; sequence LLAATLLLALLSCCLTVVSFY. Residues 68–285 lie on the Extracellular side of the membrane; that stretch reads QVAALQGDLA…VTFFGALKLL (218 aa). The tract at residues 114–138 is disordered; the sequence is IFEPPAPGEGNSSQNSRNKRAVQGP. N124 is a glycosylation site (N-linked (GlcNAc...) asparagine). In terms of domain architecture, THD spans 145–284; the sequence is DCLQLIADSE…DVTFFGALKL (140 aa). A disulfide bridge connects residues C232 and C245. N242 carries N-linked (GlcNAc...) (high mannose) asparagine glycosylation.

This sequence belongs to the tumor necrosis factor family. As to quaternary structure, homotrimer. Isoform 2 heteromultimerizes with isoform 1, probably limiting the amount of functional isoform 1 on the cell surface. Isoform 3 is unlikely form trimers or bind to BAFF receptors. In terms of processing, the soluble form derives from the membrane form by proteolytic processing. Isoform 2 is not efficiently shed from the membrane unlike isoform 1. Post-translationally, N-glycosylated. As to expression, abundantly expressed in peripheral blood Leukocytes and is specifically expressed in monocytes and macrophages. Also found in the spleen, lymph node, bone marrow, T-cells and dendritic cells. A lower expression seen in placenta, heart, lung, fetal liver, thymus, and pancreas. Isoform 2 is expressed in many myeloid cell lines.

The protein resides in the cell membrane. Its subcellular location is the secreted. Cytokine that binds to TNFRSF13B/TACI and TNFRSF17/BCMA. TNFSF13/APRIL binds to the same 2 receptors. Together, they form a 2 ligands -2 receptors pathway involved in the stimulation of B- and T-cell function and the regulation of humoral immunity. A third B-cell specific BAFF-receptor (BAFFR/BR3) promotes the survival of mature B-cells and the B-cell response. Its function is as follows. Isoform 2 seems to inhibit isoform 1 secretion and bioactivity. In terms of biological role, acts as a transcription factor for its own parent gene, in association with NF-kappa-B p50 subunit, at least in autoimmune and proliferative B-cell diseases. The presence of Delta4BAFF is essential for soluble BAFF release by IFNG/IFN-gamma-stimulated monocytes and for B-cell survival. It can directly or indirectly regulate the differential expression of a large number of genes involved in the innate immune response and the regulation of apoptosis. The polypeptide is Tumor necrosis factor ligand superfamily member 13B (TNFSF13B) (Homo sapiens (Human)).